The chain runs to 73 residues: Mauriporin (73 aa).

An N-terminal signal peptide occupies residues 1-22 (MNKKTLLVIFFITMLIVDEVNS).

Belongs to the non-disulfide-bridged peptide (NDBP) superfamily. Long chain multifunctional peptide (group 2) family. As to expression, expressed by the venom gland.

It localises to the secreted. The protein localises to the target cell membrane. Amphipathic peptide that displays potent antimicrobial activities against a range of Gram-positive and Gram-negative planktonic bacteria with MIC values in the range 5 uM to 10 uM. In more details, it is active on Listeria ivanovii (MIC=5 uM), Staphylococcus epidermidis (MIC=10 uM), Salmonella enterica (MIC=5 uM), Pseudomonas aeruginosa (ATCC 27853) (MIC=5 uM), Acinetobacter baumannii (MIC=5 uM), Klebsiella pneumoniae (MIC=5 uM), Escherichia coli (MIC=7.5 uM), Salmonella typhimurium (MIC=7.5 uM), Pseudomonas aeruginosa (ATCC 9027) (MIC=10 uM). Is also able to prevent P.aeruginosa biofilm formation while showing weak hemolytic activity towards human erythrocytes. Probably induces bacterial cell death through membrane permeabilization. Moreover, shows DNA-binding activities. Also exerts potent selective cytotoxic and antiproliferative activity against three different prostate cancer cell lines (IC(50)=4.4-7.8 uM), compared to non-tumorigenic cell lines (IC(50)=59.7 uM in Vero and 62.5 uM in HUVEC cells). This peptide possibly exerts its cytotoxic activity through a necrotic mode of cell death. Only shows diminished hemolytic activity against sheep erythrocytes. Does not induce cell death through apoptosis and consequently is not acting upon an intracellular target. The polypeptide is Mauriporin (Androctonus mauritanicus (Fat-tailed scorpion)).